The following is a 590-amino-acid chain: Beta-fructofuranosidase, insoluble isoenzyme CWINV2 (590 aa).

The signal sequence occupies residues 1–25; the sequence is MSAPKFGYVLLLIVLINISNNGVDA. Substrate is bound by residues 59-62, Gln-78, and Trp-86; that span reads WIND. Asp-62 is an active-site residue. The N-linked (GlcNAc...) asparagine glycan is linked to Asn-118. Residue 121-122 coordinates substrate; sequence WS. Asn-143 and Asn-180 each carry an N-linked (GlcNAc...) asparagine glycan. Substrate is bound by residues 185-186, Glu-241, and Asp-275; that span reads RD. Asn-335 carries an N-linked (GlcNAc...) asparagine glycan. Cys-435 and Cys-483 are disulfide-bonded. Asn-564 is a glycosylation site (N-linked (GlcNAc...) asparagine).

This sequence belongs to the glycosyl hydrolase 32 family. In terms of tissue distribution, expressed in flowers, and seeds.

It localises to the secreted. Its subcellular location is the extracellular space. The protein localises to the apoplast. It is found in the cell wall. It carries out the reaction Hydrolysis of terminal non-reducing beta-D-fructofuranoside residues in beta-D-fructofuranosides.. This chain is Beta-fructofuranosidase, insoluble isoenzyme CWINV2 (CWINV2), found in Arabidopsis thaliana (Mouse-ear cress).